The primary structure comprises 272 residues: Pyrroline-5-carboxylate reductase (272 aa).

This sequence belongs to the pyrroline-5-carboxylate reductase family.

It localises to the cytoplasm. It catalyses the reaction L-proline + NADP(+) = (S)-1-pyrroline-5-carboxylate + NADPH + 2 H(+). It carries out the reaction L-proline + NAD(+) = (S)-1-pyrroline-5-carboxylate + NADH + 2 H(+). It participates in amino-acid biosynthesis; L-proline biosynthesis; L-proline from L-glutamate 5-semialdehyde: step 1/1. In terms of biological role, catalyzes the reduction of 1-pyrroline-5-carboxylate (PCA) to L-proline. This chain is Pyrroline-5-carboxylate reductase, found in Vibrio alginolyticus.